A 1203-amino-acid polypeptide reads, in one-letter code: DNA-directed RNA polymerase subunit beta' (1203 aa).

Cys60, Cys62, Cys75, and Cys78 together coordinate Zn(2+). Residues Asp449, Asp451, and Asp453 each contribute to the Mg(2+) site. Positions 818, 892, 899, and 902 each coordinate Zn(2+).

The protein belongs to the RNA polymerase beta' chain family. The RNAP catalytic core consists of 2 alpha, 1 beta, 1 beta' and 1 omega subunit. When a sigma factor is associated with the core the holoenzyme is formed, which can initiate transcription. Mg(2+) serves as cofactor. The cofactor is Zn(2+).

It carries out the reaction RNA(n) + a ribonucleoside 5'-triphosphate = RNA(n+1) + diphosphate. In terms of biological role, DNA-dependent RNA polymerase catalyzes the transcription of DNA into RNA using the four ribonucleoside triphosphates as substrates. This Bacillus cereus (strain ZK / E33L) protein is DNA-directed RNA polymerase subunit beta'.